Reading from the N-terminus, the 230-residue chain is Orotidine 5'-phosphate decarboxylase (230 aa).

Substrate-binding positions include Asp-10, Lys-32, 59 to 68 (DLKYHDIPNT), Thr-119, Arg-180, Gln-189, Gly-209, and Arg-210. Lys-61 serves as the catalytic Proton donor.

The protein belongs to the OMP decarboxylase family. Type 1 subfamily. In terms of assembly, homodimer.

It carries out the reaction orotidine 5'-phosphate + H(+) = UMP + CO2. It participates in pyrimidine metabolism; UMP biosynthesis via de novo pathway; UMP from orotate: step 2/2. In terms of biological role, catalyzes the decarboxylation of orotidine 5'-monophosphate (OMP) to uridine 5'-monophosphate (UMP). The sequence is that of Orotidine 5'-phosphate decarboxylase from Haemophilus influenzae (strain 86-028NP).